Consider the following 135-residue polypeptide: Ribosome-binding factor A (135 aa).

This sequence belongs to the RbfA family. As to quaternary structure, monomer. Binds 30S ribosomal subunits, but not 50S ribosomal subunits or 70S ribosomes.

Its subcellular location is the cytoplasm. One of several proteins that assist in the late maturation steps of the functional core of the 30S ribosomal subunit. Associates with free 30S ribosomal subunits (but not with 30S subunits that are part of 70S ribosomes or polysomes). Required for efficient processing of 16S rRNA. May interact with the 5'-terminal helix region of 16S rRNA. The protein is Ribosome-binding factor A of Methylobacterium nodulans (strain LMG 21967 / CNCM I-2342 / ORS 2060).